We begin with the raw amino-acid sequence, 317 residues long: Small ribosomal subunit biogenesis GTPase RsgA (317 aa).

Residues aspartate 88–phenylalanine 249 form the CP-type G domain. Residues asparagine 136–aspartate 139 and glycine 190–threonine 198 each bind GTP. Cysteine 273, cysteine 278, histidine 280, and cysteine 286 together coordinate Zn(2+).

The protein belongs to the TRAFAC class YlqF/YawG GTPase family. RsgA subfamily. As to quaternary structure, monomer. Associates with 30S ribosomal subunit, binds 16S rRNA. The cofactor is Zn(2+).

It localises to the cytoplasm. Functionally, one of several proteins that assist in the late maturation steps of the functional core of the 30S ribosomal subunit. Helps release RbfA from mature subunits. May play a role in the assembly of ribosomal proteins into the subunit. Circularly permuted GTPase that catalyzes slow GTP hydrolysis, GTPase activity is stimulated by the 30S ribosomal subunit. This Paraburkholderia phymatum (strain DSM 17167 / CIP 108236 / LMG 21445 / STM815) (Burkholderia phymatum) protein is Small ribosomal subunit biogenesis GTPase RsgA.